We begin with the raw amino-acid sequence, 213 residues long: Large ribosomal subunit protein uL1 (213 aa).

It belongs to the universal ribosomal protein uL1 family. As to quaternary structure, part of the 50S ribosomal subunit.

In terms of biological role, binds directly to 23S rRNA. Probably involved in E site tRNA release. Its function is as follows. Protein L1 is also a translational repressor protein, it controls the translation of its operon by binding to its mRNA. This Methanosarcina acetivorans (strain ATCC 35395 / DSM 2834 / JCM 12185 / C2A) protein is Large ribosomal subunit protein uL1.